We begin with the raw amino-acid sequence, 288 residues long: HTH-type transcriptional regulator CzcR (288 aa).

The HTH lysR-type domain occupies 1-58 (MELRDLQIFQSVADQGSVSSAAKELNYVQSNVTTRIKQLENELKTPLFYRHKRGMTLT). Positions 18-37 (VSSAAKELNYVQSNVTTRIK) form a DNA-binding region, H-T-H motif.

The protein belongs to the LysR transcriptional regulatory family.

In Bacillus thuringiensis subsp. konkukian (strain 97-27), this protein is HTH-type transcriptional regulator CzcR (czcR).